The primary structure comprises 353 residues: Glutamate 5-kinase (353 aa).

Residue Lys-8 participates in ATP binding. Substrate is bound by residues Ser-47, Asp-134, and Asn-146. 198-204 is an ATP binding site; it reads TGGIRSK. A PUA domain is found at 262–339; that stretch reads AGKIYVNKGA…SDLKKILGYE (78 aa).

It belongs to the glutamate 5-kinase family.

It is found in the cytoplasm. The enzyme catalyses L-glutamate + ATP = L-glutamyl 5-phosphate + ADP. The protein operates within amino-acid biosynthesis; L-proline biosynthesis; L-glutamate 5-semialdehyde from L-glutamate: step 1/2. Functionally, catalyzes the transfer of a phosphate group to glutamate to form L-glutamate 5-phosphate. The chain is Glutamate 5-kinase from Thermotoga maritima (strain ATCC 43589 / DSM 3109 / JCM 10099 / NBRC 100826 / MSB8).